The sequence spans 232 residues: Ribose-5-phosphate isomerase A (232 aa).

Residues Ser-29–Thr-32, Asp-86–Asp-89, and Lys-99–Gly-102 contribute to the substrate site. Glu-108 acts as the Proton acceptor in catalysis. Lys-126 is a binding site for substrate.

The protein belongs to the ribose 5-phosphate isomerase family. Homodimer.

It catalyses the reaction aldehydo-D-ribose 5-phosphate = D-ribulose 5-phosphate. It participates in carbohydrate degradation; pentose phosphate pathway; D-ribose 5-phosphate from D-ribulose 5-phosphate (non-oxidative stage): step 1/1. In terms of biological role, catalyzes the reversible conversion of ribose-5-phosphate to ribulose 5-phosphate. The protein is Ribose-5-phosphate isomerase A of Synechococcus sp. (strain ATCC 27144 / PCC 6301 / SAUG 1402/1) (Anacystis nidulans).